The primary structure comprises 159 residues: Phosphopantetheine adenylyltransferase (159 aa).

Thr-10 serves as a coordination point for substrate. ATP is bound by residues 10–11 (TF) and His-18. Positions 42, 74, and 88 each coordinate substrate. Residues 89–91 (GLR), Glu-99, and 124–130 (WSFISSS) contribute to the ATP site.

This sequence belongs to the bacterial CoaD family. Homohexamer. Mg(2+) is required as a cofactor.

The protein resides in the cytoplasm. The catalysed reaction is (R)-4'-phosphopantetheine + ATP + H(+) = 3'-dephospho-CoA + diphosphate. The protein operates within cofactor biosynthesis; coenzyme A biosynthesis; CoA from (R)-pantothenate: step 4/5. Its function is as follows. Reversibly transfers an adenylyl group from ATP to 4'-phosphopantetheine, yielding dephospho-CoA (dPCoA) and pyrophosphate. In Citrobacter koseri (strain ATCC BAA-895 / CDC 4225-83 / SGSC4696), this protein is Phosphopantetheine adenylyltransferase.